The following is a 321-amino-acid chain: Cyclic AMP-AMP-AMP synthase (321 aa).

Lysine 63 contributes to the ATP binding site. Positions 72 and 74 each coordinate Mg(2+). Residues aspartate 74, histidine 162, lysine 185, 201 to 203, and asparagine 270 each bind ATP; that span reads KSF.

Belongs to the CD-NTase family. A01 subfamily. In terms of assembly, forms complexes with Cap7 with 1:1 and 2:2 stoichimetry, and a 1:1:6 CdnC:Cap7:Cap6 complex. Mg(2+) is required as a cofactor.

The enzyme catalyses 3 ATP = 3',3',3'-c-tri-AMP + 3 diphosphate. It catalyses the reaction 2 ATP = 3',3'-c-di-AMP + 2 diphosphate. Its activity is regulated as follows. The 2:2 CdnC:Cap7 (Cap7 is also called HORMA) complex is activated for cAAA synthesis by long dsDNA, but not 40 bp dsDNA or ssDNA; the 1:1 complex is inactive in vitro. The 2:2:DNA complex is catalytically disassembled and inactivated by Cap6 (also called Trip13). In terms of biological role, cyclic nucleotide synthase (second messenger synthase) of a CBASS antivirus system. CBASS (cyclic oligonucleotide-based antiphage signaling system) provides immunity against bacteriophage. The CD-NTase protein synthesizes cyclic nucleotides in response to infection; these serve as specific second messenger signals. The signals activate a diverse range of effectors, leading to bacterial cell death and thus abortive phage infection. A type III-C(AAA) CBASS system. Cyclic nucleotide synthase that upon activation catalyzes the synthesis of 3',3',3'-cyclic AMP-AMP-AMP (3',3',3'-c-tri-AMP or cAAA) as the major product, and 3',3'-c-di-AMP as a minor product. Cannot use GTP as a substrate. Functionally, protects E.coli strain JP313 against bacteriophage lambda cI- infection. When the cdnC-cap7-cap6-nucC operon is transformed into a susceptible strain it confers bacteriophage immunity. Mutations in the sensor (Cap7 also called HORMA) or effector proteins (CdnC, NucC) but not the disassembly protein (Cap6 also called Trip13) no longer confer immunity. The presence of the intact operon leads to culture collapse and cell death, which occurs before the phage has finished its replication cycle, thus protecting non-infected bacteria by aborting the phage infection and preventing its propagation. In Escherichia coli (strain MS 115-1), this protein is Cyclic AMP-AMP-AMP synthase.